A 258-amino-acid chain; its full sequence is MKNITFIFFILLASPLYANGDKLYRADSRPPDEIKRSGGLMPRGHNEYFDRGTQMNINLYDHARGTQTGFVRYDDGYVSTSLSLRSAHLAGQSILSGYSTYYIYVIATAPNMFNVNDVLGVYSPHPYEQEVSALGGIPYSQIYGWYRVNFGVIDERLHRNREYRDRYYRNLNIAPAEDGYRLAGFPPDHQAWREEPWIHHAPQGCGNSSRTITGDTCNEETQNLSTIYLRKYQSKVKRQIFSDYQSEVDIYNRIRNEL.

The first 18 residues, 1-18 (MKNITFIFFILLASPLYA), serve as a signal peptide directing secretion. An NAD(+)-binding site is contributed by 25 to 39 (RADSRPPDEIKRSGG). Residue Glu128 is part of the active site. An intrachain disulfide couples Cys205 to Cys217.

The protein belongs to the enterotoxin A family. In terms of assembly, heterohexamer of one A chain and of five B chains.

Its function is as follows. The biological activity of the toxin is produced by the A chain, which activates intracellular adenyl cyclase. The polypeptide is Heat-labile enterotoxin A chain (eltA) (Escherichia coli O78:H11 (strain H10407 / ETEC)).